The following is a 431-amino-acid chain: Galactose-3-O-sulfotransferase 3 (431 aa).

At Met-1 to Lys-19 the chain is on the cytoplasmic side. A helical; Signal-anchor for type II membrane protein transmembrane segment spans residues Ile-20–Leu-40. At Ser-41 to Thr-431 the chain is on the lumenal side. Asn-91, Asn-110, Asn-177, and Asn-302 each carry an N-linked (GlcNAc...) asparagine glycan. The disordered stretch occupies residues Lys-400–Thr-431. The span at Ile-421 to Thr-431 shows a compositional bias: low complexity.

Belongs to the galactose-3-O-sulfotransferase family. The cofactor is Mg(2+).

The protein resides in the golgi apparatus. It localises to the golgi stack membrane. It functions in the pathway protein modification; carbohydrate sulfation. Transfers a sulfate to position 3 of non-reducing beta-galactosyl residues in N-glycans and core2-branched O-glycans. Has high activity towards Gal-beta-1,4-GlcNAc, Gal-beta-1,4(Fuc-alpha-1,3)GlcNAc and lower activity towards Gal-beta-1,3(Fuc-alpha-1,4)GlcNAc. The polypeptide is Galactose-3-O-sulfotransferase 3 (Gal3st3) (Mus musculus (Mouse)).